A 288-amino-acid polypeptide reads, in one-letter code: Quinate/shikimate dehydrogenase (288 aa).

2 residues coordinate substrate: Lys71 and Asp107. NAD(+) contacts are provided by residues 132 to 135, 155 to 158, Lys205, 232 to 235, and Gly255; these read AGGA, NRKD, and CVYN.

It belongs to the shikimate dehydrogenase family. Homodimer.

The catalysed reaction is L-quinate + NAD(+) = 3-dehydroquinate + NADH + H(+). It catalyses the reaction L-quinate + NADP(+) = 3-dehydroquinate + NADPH + H(+). The enzyme catalyses shikimate + NADP(+) = 3-dehydroshikimate + NADPH + H(+). It carries out the reaction shikimate + NAD(+) = 3-dehydroshikimate + NADH + H(+). It participates in metabolic intermediate biosynthesis; chorismate biosynthesis; chorismate from D-erythrose 4-phosphate and phosphoenolpyruvate: step 4/7. Functionally, the actual biological function of YdiB remains unclear, nor is it known whether 3-dehydroshikimate or quinate represents the natural substrate. Catalyzes the reversible NAD-dependent reduction of both 3-dehydroshikimate (DHSA) and 3-dehydroquinate to yield shikimate (SA) and quinate, respectively. It can use both NAD or NADP for catalysis, however it has higher catalytic efficiency with NAD. The protein is Quinate/shikimate dehydrogenase of Salmonella agona (strain SL483).